The sequence spans 720 residues: DNA replication licensing factor mcm7 (720 aa).

The segment at 183 to 210 adopts a C4-type zinc-finger fold; the sequence is CDQCGAETYQPIQSPTFMPLIMCPSREC. Positions 331 to 537 constitute an MCM domain; that stretch reads FYEKLAASIA…NDLRLAQHIT (207 aa). Tyrosine 344, glycine 383, alanine 385, lysine 386, serine 387, asparagine 488, arginine 513, and arginine 603 together coordinate ATP. The short motif at 512–515 is the Arginine finger element; the sequence is SRFD.

It belongs to the MCM family. Component of the mcm2-7 complex (RLF-M). The complex forms a toroidal hexameric ring with the proposed subunit order mcm2-mcm6-mcm4-mcm7-mcm3-mcm5. The heterodimer of mmcm3/mcm5 interacts with mcm4, mmcm6, mcm7 and weakly with mcm2. The N-terminus is required for interaction with mmcm3, though this interaction may not be direct, and remains in a complex with mmcm3 throughout the cell cycle. Begins to associate with zmcm6 at the neurula stage. Component of the replisome complex. Component of the CMG helicase complex, composed of the mcm2-7 complex, the GINS complex and cdc45. Post-translationally, ubiquitinated by traip when forks converge following formation of DNA interstrand cross-links. Short ubiquitin chains on mcm7 promote recruitment of DNA glycosylase neil3. If the interstrand cross-link cannot be cleaved by neil3, the ubiquitin chains continue to grow on mcm7, promoting the unloading of the CMG helicase complex by the vcp/p97 ATPase.

It localises to the nucleus. The protein localises to the chromosome. The enzyme catalyses ATP + H2O = ADP + phosphate + H(+). Its function is as follows. Acts as a component of the mcm2-7 complex (mcm complex) which is the putative replicative helicase essential for 'once per cell cycle' DNA replication initiation and elongation in eukaryotic cells. The active ATPase sites in the mcm2-7 ring are formed through the interaction surfaces of two neighboring subunits such that a critical structure of a conserved arginine finger motif is provided in trans relative to the ATP-binding site of the Walker A box of the adjacent subunit. The six ATPase active sites, however, are likely to contribute differentially to the complex helicase activity. The existence of maternal and zygotic forms of mcm3 and mcm6 suggests that specific forms of mcm2-7 complexes may be used during different stages of development. The protein is DNA replication licensing factor mcm7 of Xenopus tropicalis (Western clawed frog).